We begin with the raw amino-acid sequence, 286 residues long: Pantothenate synthetase (286 aa).

An ATP-binding site is contributed by 30–37; that stretch reads MGALHEGH. The active-site Proton donor is histidine 37. Glutamine 61 serves as a coordination point for (R)-pantoate. Glutamine 61 contacts beta-alanine. 147 to 150 provides a ligand contact to ATP; that stretch reads GEKD. A (R)-pantoate-binding site is contributed by glutamine 153. Residues leucine 176 and 184–187 contribute to the ATP site; that span reads HSSR.

It belongs to the pantothenate synthetase family. Homodimer.

It is found in the cytoplasm. It carries out the reaction (R)-pantoate + beta-alanine + ATP = (R)-pantothenate + AMP + diphosphate + H(+). It functions in the pathway cofactor biosynthesis; (R)-pantothenate biosynthesis; (R)-pantothenate from (R)-pantoate and beta-alanine: step 1/1. Its function is as follows. Catalyzes the condensation of pantoate with beta-alanine in an ATP-dependent reaction via a pantoyl-adenylate intermediate. This chain is Pantothenate synthetase, found in Bartonella tribocorum (strain CIP 105476 / IBS 506).